The primary structure comprises 715 residues: Fatty acid oxidation complex subunit alpha (715 aa).

An enoyl-CoA hydratase region spans residues 8-197 (NSQPSAFSLT…NLGLVEEAVP (190 aa)). Positions 313–715 (ATIKKVGVLG…MANEEQSFYS (403 aa)) are 3-hydroxyacyl-CoA dehydrogenase.

In the N-terminal section; belongs to the enoyl-CoA hydratase/isomerase family. The protein in the central section; belongs to the 3-hydroxyacyl-CoA dehydrogenase family. In terms of assembly, heterotetramer of two alpha chains (FadJ) and two beta chains (FadI).

It localises to the cytoplasm. The catalysed reaction is a (3S)-3-hydroxyacyl-CoA = a (2E)-enoyl-CoA + H2O. The enzyme catalyses a 4-saturated-(3S)-3-hydroxyacyl-CoA = a (3E)-enoyl-CoA + H2O. It catalyses the reaction a (3S)-3-hydroxyacyl-CoA + NAD(+) = a 3-oxoacyl-CoA + NADH + H(+). It carries out the reaction (3S)-3-hydroxybutanoyl-CoA = (3R)-3-hydroxybutanoyl-CoA. The protein operates within lipid metabolism; fatty acid beta-oxidation. Catalyzes the formation of a hydroxyacyl-CoA by addition of water on enoyl-CoA. Also exhibits 3-hydroxyacyl-CoA epimerase and 3-hydroxyacyl-CoA dehydrogenase activities. This is Fatty acid oxidation complex subunit alpha from Photobacterium profundum (strain SS9).